We begin with the raw amino-acid sequence, 178 residues long: MSGGKYVDSEGHLYTVPIREQGNIYKPNNKAMAEELSEKQVYDAHTKEIDLVNRDPKHLNDDVVKIDFEDVIAEPEGTHSFDGIWKASFTTFTVTKYWFYRLLSALFGIPMALIWGIYFAILSFLHIWAVVPCIKSFLIEIQCISRVYSIYVHTVCDPLFEAVGKIFSNVRINLQKEI.

At serine 2 the chain carries N-acetylserine. Serine 2 carries the phosphoserine modification. The required for homooligomerization stretch occupies residues 2 to 94; it reads SGGKYVDSEG…WKASFTTFTV (93 aa). The Cytoplasmic segment spans residues 2 to 104; the sequence is SGGKYVDSEG…TKYWFYRLLS (103 aa). An N6-acetyllysine; alternate modification is found at lysine 5. Lysine 5 participates in a covalent cross-link: Glycyl lysine isopeptide (Lys-Gly) (interchain with G-Cter in ubiquitin); alternate. The residue at position 6 (tyrosine 6) is a Phosphotyrosine. Serine 9 bears the Phosphoserine mark. Tyrosine 14 carries the post-translational modification Phosphotyrosine; by ABL1. Tyrosine 25 is modified (phosphotyrosine). Residues lysine 26 and lysine 30 each participate in a glycyl lysine isopeptide (Lys-Gly) (interchain with G-Cter in ubiquitin) cross-link. At serine 37 the chain carries Phosphoserine. Residues lysine 39, lysine 47, and lysine 57 each participate in a glycyl lysine isopeptide (Lys-Gly) (interchain with G-Cter in ubiquitin) cross-link. Positions 82 to 94 are interaction with CAVIN3; sequence DGIWKASFTTFTV. An intramembrane region (helical) is located at residues 105-125; that stretch reads ALFGIPMALIWGIYFAILSFL. The Cytoplasmic portion of the chain corresponds to 126–178; that stretch reads HIWAVVPCIKSFLIEIQCISRVYSIYVHTVCDPLFEAVGKIFSNVRINLQKEI. The interacts with SPRY1, SPRY2, SPRY3 and SPRY4 stretch occupies residues 131–142; the sequence is VPCIKSFLIEIQ. Residues cysteine 133, cysteine 143, and cysteine 156 are each lipidated (S-palmitoyl cysteine). Residues 149 to 160 form an interacts with SPRY1, SPRY2, and SPRY4 region; it reads SIYVHTVCDPLF. The segment at 167-178 is interacts with SPRY1, SPRY2, SPRY3 and SPRY4; sequence FSNVRINLQKEI.

It belongs to the caveolin family. Homooligomer. Interacts with GLIPR2. Interacts with NOSTRIN. Interacts with SNAP25 and STX1A. Interacts (via the N-terminus) with DPP4; the interaction is direct. Interacts with CTNNB1, CDH1 and JUP. Interacts with PACSIN2; this interaction induces membrane tubulation. Interacts with SLC7A9. Interacts with BMX and BTK. Interacts with TGFBR1. Interacts with CAVIN3 (via leucine-zipper domain) in a cholesterol-sensitive manner. Interacts with CAVIN1. Interacts with EHD2 in a cholesterol-dependent manner. Forms a ternary complex with UBXN6 and VCP; mediates CAV1 targeting to lysosomes for degradation. Interacts with ABCG1; this interaction regulates ABCG1-mediated cholesterol efflux. Interacts with NEU3; this interaction enhances NEU3 sialidase activity within caveola. Interacts (via C-terminus) with SPRY1, SPRY2 (via C-terminus), SPRY3, and SPRY4. Interacts with IGFBP5; this interaction allows trafficking of IGFBP5 from the plasma membrane to the nucleus. In terms of processing, phosphorylated at Tyr-14 by ABL1 in response to oxidative stress. Post-translationally, ubiquitinated. Undergo monoubiquitination and multi- and/or polyubiquitination. Monoubiquitination of N-terminal lysines promotes integration in a ternary complex with UBXN6 and VCP which promotes oligomeric CAV1 targeting to lysosomes for degradation. Ubiquitinated by ZNRF1; leading to degradation and modulation of the TLR4-mediated immune response.

The protein localises to the golgi apparatus membrane. It is found in the cell membrane. Its subcellular location is the membrane. The protein resides in the caveola. It localises to the membrane raft. Functionally, may act as a scaffolding protein within caveolar membranes. Forms a stable heterooligomeric complex with CAV2 that targets to lipid rafts and drives caveolae formation. Mediates the recruitment of CAVIN proteins (CAVIN1/2/3/4) to the caveolae. Interacts directly with G-protein alpha subunits and can functionally regulate their activity. Involved in the costimulatory signal essential for T-cell receptor (TCR)-mediated T-cell activation. Its binding to DPP4 induces T-cell proliferation and NF-kappa-B activation in a T-cell receptor/CD3-dependent manner. Recruits CTNNB1 to caveolar membranes and may regulate CTNNB1-mediated signaling through the Wnt pathway. Negatively regulates TGFB1-mediated activation of SMAD2/3 by mediating the internalization of TGFBR1 from membrane rafts leading to its subsequent degradation. Binds 20(S)-hydroxycholesterol (20(S)-OHC). This is Caveolin-1 (CAV1) from Pongo abelii (Sumatran orangutan).